The sequence spans 210 residues: Large ribosomal subunit protein bL25 (210 aa).

It belongs to the bacterial ribosomal protein bL25 family. CTC subfamily. In terms of assembly, part of the 50S ribosomal subunit; part of the 5S rRNA/L5/L18/L25 subcomplex. Contacts the 5S rRNA. Binds to the 5S rRNA independently of L5 and L18.

Its function is as follows. This is one of the proteins that binds to the 5S RNA in the ribosome where it forms part of the central protuberance. This chain is Large ribosomal subunit protein bL25, found in Frankia casuarinae (strain DSM 45818 / CECT 9043 / HFP020203 / CcI3).